The following is a 602-amino-acid chain: Aspartate--tRNA(Asp/Asn) ligase (602 aa).

Glu-176 serves as a coordination point for L-aspartate. Positions Gln-200–Lys-203 are aspartate. Residues Arg-222 and His-452 each coordinate L-aspartate. Arg-222–Glu-224 lines the ATP pocket. Glu-490 provides a ligand contact to ATP. Arg-497 lines the L-aspartate pocket. Gly-542–Arg-545 contacts ATP.

Belongs to the class-II aminoacyl-tRNA synthetase family. Type 1 subfamily. Homodimer.

It localises to the cytoplasm. It carries out the reaction tRNA(Asx) + L-aspartate + ATP = L-aspartyl-tRNA(Asx) + AMP + diphosphate. Aspartyl-tRNA synthetase with relaxed tRNA specificity since it is able to aspartylate not only its cognate tRNA(Asp) but also tRNA(Asn). Reaction proceeds in two steps: L-aspartate is first activated by ATP to form Asp-AMP and then transferred to the acceptor end of tRNA(Asp/Asn). This chain is Aspartate--tRNA(Asp/Asn) ligase, found in Rickettsia conorii (strain ATCC VR-613 / Malish 7).